Here is a 541-residue protein sequence, read N- to C-terminus: MDSQRNLFLVALLFVSFLIWQAWQTDHNPQPVAQTAGQSISDTASQAVPESGQGKLITVKTDVLALTINTRGGDIEQADLLAYPATLGSDTPFQLLETTPQFVYQAQSGLTGKSGPDNPANGARPLYSANQTSYEMLPGQDELRIPLTYTAANGVIYTKTFVLKRNDYAIAVDYKVKNDSHDALDLTLFGQLKQSVDLPKHRDTGSNNFALHTFRGAAYSSSDDKYQKYSFSDIEDKNLNVQTKGGWVAMLQQYFATAWIPHDSGVNTFYSANLGNGQAAIGYKAPSVSVAPNTEKVLSTTLWVGPELQSDMAAVAPHLDLTVDYGWLWFISQPLFKLLQLIHSFVGNWGFAIIIITFIVRGIMYPLTKAQYTSMAKMRMLQPKLQAMRERIGDDKQRMSQEMMALYKTEKVNPLGGCFPLLIQMPIFLALYYMLMGSVELRQAPFALWIHDLAAPDPFYILPILMGVTMFFIQKMSPTTVTDPMQQKIMTFMPVIFTVFFLWFPSGLVLYYIVSNLVTIIQQQLIYRGLEKRGLHSRDKK.

5 helical membrane-spanning segments follow: residues 7 to 27 (LFLV…QTDH), 340 to 360 (QLIH…TFIV), 415 to 435 (LGGC…YYML), 453 to 473 (LAAP…MFFI), and 494 to 514 (PVIF…YYIV).

The protein belongs to the OXA1/ALB3/YidC family. Type 1 subfamily. As to quaternary structure, interacts with the Sec translocase complex via SecD. Specifically interacts with transmembrane segments of nascent integral membrane proteins during membrane integration.

It is found in the cell inner membrane. Its function is as follows. Required for the insertion and/or proper folding and/or complex formation of integral membrane proteins into the membrane. Involved in integration of membrane proteins that insert both dependently and independently of the Sec translocase complex, as well as at least some lipoproteins. Aids folding of multispanning membrane proteins. This chain is Membrane protein insertase YidC, found in Edwardsiella ictaluri (strain 93-146).